The primary structure comprises 237 residues: DNA repair protein RecO (237 aa).

It belongs to the RecO family.

Involved in DNA repair and RecF pathway recombination. The polypeptide is DNA repair protein RecO (Rickettsia rickettsii (strain Iowa)).